A 213-amino-acid polypeptide reads, in one-letter code: Pyrrolidone-carboxylate peptidase (213 aa).

Residues Glu80, Cys143, and His165 contribute to the active site.

This sequence belongs to the peptidase C15 family. In terms of assembly, homotetramer.

It is found in the cytoplasm. It catalyses the reaction Release of an N-terminal pyroglutamyl group from a polypeptide, the second amino acid generally not being Pro.. Removes 5-oxoproline from various penultimate amino acid residues except L-proline. The chain is Pyrrolidone-carboxylate peptidase from Erwinia tasmaniensis (strain DSM 17950 / CFBP 7177 / CIP 109463 / NCPPB 4357 / Et1/99).